The primary structure comprises 880 residues: DNA mismatch repair protein MutS (880 aa).

625–632 lines the ATP pocket; that stretch reads GPNMAGKS.

Belongs to the DNA mismatch repair MutS family.

Its function is as follows. This protein is involved in the repair of mismatches in DNA. It is possible that it carries out the mismatch recognition step. This protein has a weak ATPase activity. This is DNA mismatch repair protein MutS from Alkaliphilus oremlandii (strain OhILAs) (Clostridium oremlandii (strain OhILAs)).